The following is a 308-amino-acid chain: Uricase-2 (308 aa).

Catalysis depends on charge relay system residues Lys-17 and Thr-63. Urate is bound by residues Thr-63, Asp-64, Phe-165, Arg-182, Val-237, Gln-238, and Asn-264. The active-site Charge relay system is His-266. A Microbody targeting signal motif is present at residues 306 to 308 (SKL).

This sequence belongs to the uricase family. As to quaternary structure, homotetramer. As to expression, expressed predominantly in the uninfected cells of the central tissue of the root nodule. Also expressed in the nodule parenchyma cells and vascular tissue, in the roots, stems and leaves of uninfected adult plants, and in the cotyledons, roots and hypocotyls of developing seedlings. Localized to the metaxylem parenchyma cells and phloem fibers of developing roots.

Its subcellular location is the peroxisome. It carries out the reaction urate + O2 + H2O = 5-hydroxyisourate + H2O2. It participates in purine metabolism; urate degradation; (S)-allantoin from urate: step 1/3. Functionally, catalyzes the oxidation of uric acid to 5-hydroxyisourate, which is further processed to form (S)-allantoin. The protein is Uricase-2 (URIII) of Phaseolus vulgaris (Kidney bean).